Here is a 434-residue protein sequence, read N- to C-terminus: Serine--tRNA ligase (434 aa).

L-serine is bound at residue 237-239; sequence TAE. Position 268–270 (268–270) interacts with ATP; sequence RAE. Glu-291 is a binding site for L-serine. 358 to 361 contacts ATP; the sequence is EISS. Ser-393 serves as a coordination point for L-serine.

The protein belongs to the class-II aminoacyl-tRNA synthetase family. Type-1 seryl-tRNA synthetase subfamily. As to quaternary structure, homodimer. The tRNA molecule binds across the dimer.

Its subcellular location is the cytoplasm. The catalysed reaction is tRNA(Ser) + L-serine + ATP = L-seryl-tRNA(Ser) + AMP + diphosphate + H(+). It catalyses the reaction tRNA(Sec) + L-serine + ATP = L-seryl-tRNA(Sec) + AMP + diphosphate + H(+). It participates in aminoacyl-tRNA biosynthesis; selenocysteinyl-tRNA(Sec) biosynthesis; L-seryl-tRNA(Sec) from L-serine and tRNA(Sec): step 1/1. Catalyzes the attachment of serine to tRNA(Ser). Is also able to aminoacylate tRNA(Sec) with serine, to form the misacylated tRNA L-seryl-tRNA(Sec), which will be further converted into selenocysteinyl-tRNA(Sec). The protein is Serine--tRNA ligase of Rhodopseudomonas palustris (strain BisB5).